A 424-amino-acid chain; its full sequence is Serine hydroxymethyltransferase (424 aa).

Residues Leu123 and 127–129 (GHL) each bind (6S)-5,6,7,8-tetrahydrofolate. Lys232 is subject to N6-(pyridoxal phosphate)lysine. Glu245 contributes to the (6S)-5,6,7,8-tetrahydrofolate binding site.

The protein belongs to the SHMT family. Homodimer. The cofactor is pyridoxal 5'-phosphate.

Its subcellular location is the cytoplasm. The enzyme catalyses (6R)-5,10-methylene-5,6,7,8-tetrahydrofolate + glycine + H2O = (6S)-5,6,7,8-tetrahydrofolate + L-serine. Its pathway is one-carbon metabolism; tetrahydrofolate interconversion. It participates in amino-acid biosynthesis; glycine biosynthesis; glycine from L-serine: step 1/1. Functionally, catalyzes the reversible interconversion of serine and glycine with tetrahydrofolate (THF) serving as the one-carbon carrier. This reaction serves as the major source of one-carbon groups required for the biosynthesis of purines, thymidylate, methionine, and other important biomolecules. Also exhibits THF-independent aldolase activity toward beta-hydroxyamino acids, producing glycine and aldehydes, via a retro-aldol mechanism. The protein is Serine hydroxymethyltransferase of Kocuria rhizophila (strain ATCC 9341 / DSM 348 / NBRC 103217 / DC2201).